A 346-amino-acid chain; its full sequence is Heparan sulfate glucosamine 3-O-sulfotransferase 5 (346 aa).

At 1–12 (MLFKQQVWLRQK) the chain is on the cytoplasmic side. A helical; Signal-anchor for type II membrane protein transmembrane segment spans residues 13–32 (LLVLGSLAVGSLLYLVARVG). At 33 to 346 (SLDRLQPICP…QITGRTLNWP (314 aa)) the chain is on the lumenal side. An N-linked (GlcNAc...) asparagine glycan is attached at asparagine 75. A 3'-phosphoadenylyl sulfate-binding site is contributed by 100–104 (KGGTR). Residues 122 to 128 (EIHFFDN) and 155 to 158 (KSPA) contribute to the substrate site. N-linked (GlcNAc...) asparagine glycosylation occurs at asparagine 173. 3'-phosphoadenylyl sulfate-binding residues include arginine 183 and serine 191. Residue asparagine 204 is glycosylated (N-linked (GlcNAc...) asparagine). 226-227 (YK) contributes to the substrate binding site. An N-linked (GlcNAc...) asparagine glycan is attached at asparagine 287. Position 293 (tyrosine 293) interacts with 3'-phosphoadenylyl sulfate. Cysteine 294 and cysteine 304 form a disulfide bridge. Residue 309 to 313 (KGRIH) participates in 3'-phosphoadenylyl sulfate binding.

This sequence belongs to the sulfotransferase 1 family.

The protein localises to the golgi apparatus membrane. The catalysed reaction is alpha-D-glucosaminyl-[heparan sulfate](n) + 3'-phosphoadenylyl sulfate = 3-sulfo-alpha-D-glucosaminyl-[heparan sulfate](n) + adenosine 3',5'-bisphosphate + H(+). Functionally, sulfotransferase that utilizes 3'-phospho-5'-adenylyl sulfate (PAPS) to catalyze the transfer of a sulfo group to position 3 of glucosamine residues in heparan. Catalyzes the rate limiting step in the biosynthesis of heparan sulfate (HSact). This modification is a crucial step in the biosynthesis of anticoagulant heparan sulfate as it completes the structure of the antithrombin pentasaccharide binding site. Also generates GlcUA-GlcNS or IdoUA-GlcNS and IdoUA2S-GlcNH2. The protein is Heparan sulfate glucosamine 3-O-sulfotransferase 5 (Hs3st5) of Mus musculus (Mouse).